Consider the following 417-residue polypeptide: Probable phosphoglycerate kinase (417 aa).

(2R)-3-phosphoglycerate is bound by residues Val-23, Asp-24, Phe-25, Asn-26, Gln-38, Arg-39, Ser-62, His-63, Gly-65, Arg-66, Leu-121, Arg-122, His-169, and Arg-170. Gly-213 contacts ADP. Gly-213 lines the CDP pocket. AMP contacts are provided by Ala-214 and Lys-215. Ala-214 is an ATP binding site. Ala-214 serves as a coordination point for Mg(2+). Mg(2+) is bound by residues Ala-217 and Asp-218. Asp-218 is a CDP binding site. Lys-219 contributes to the AMP binding site. Residue Lys-219 coordinates ATP. An ADP-binding site is contributed by Gly-237. Position 237 (Gly-237) interacts with CDP. Residues Gly-238 and Gly-312 each contribute to the AMP site. ATP contacts are provided by Gly-238 and Gly-312. Gly-337, Ala-339, and Phe-342 together coordinate CDP. ADP is bound at residue Phe-342. Glu-343 provides a ligand contact to AMP. Residues Glu-343, Asp-374, and Thr-375 each coordinate ATP. Asp-374 provides a ligand contact to Mg(2+).

It belongs to the phosphoglycerate kinase family. In terms of assembly, monomer. Mg(2+) serves as cofactor.

The protein localises to the cytoplasm. The catalysed reaction is (2R)-3-phosphoglycerate + ATP = (2R)-3-phospho-glyceroyl phosphate + ADP. It functions in the pathway carbohydrate degradation; glycolysis; pyruvate from D-glyceraldehyde 3-phosphate: step 2/5. This Caenorhabditis elegans protein is Probable phosphoglycerate kinase (pgk-1).